The sequence spans 169 residues: Biogenesis of lysosome-related organelles complex 1 subunit 4 (169 aa).

This sequence belongs to the BLOC1S4 family. Component of the biogenesis of lysosome-related organelles complex-1 (BLOC-1) composed of Blos1, Blos2, Blos3, Blos4, Dysb, Muted, Pldn and Snapin. Interacts with Pldn.

Its function is as follows. Component of the biogenesis of lysosome-related organelles complex-1 (BLOC-1) involved in pigment granule biogenesis. The polypeptide is Biogenesis of lysosome-related organelles complex 1 subunit 4 (Drosophila melanogaster (Fruit fly)).